The sequence spans 126 residues: Putative lipoprotein LprD (126 aa).

Positions 1-19 (MSTTRRRRPALVALVTIAA) are cleaved as a signal peptide. Residue Cys20 is the site of N-palmitoyl cysteine attachment. Cys20 carries the S-diacylglycerol cysteine lipid modification. A helical membrane pass occupies residues 44–64 (GYALQWPLFAGFCLYTYHNFV).

This sequence to M.tuberculosis Rv1343c.

The protein resides in the cell membrane. The sequence is that of Putative lipoprotein LprD (lprD) from Mycobacterium leprae (strain TN).